The following is a 1489-amino-acid chain: ZEB2-regulated ABC transporter 1 (1489 aa).

Residues 1–55 (MALPEANMSSTRSEQSSRSHDTIVGNEQPHSEKPAASAPGDQMSSDDEDEGPQTE) form a disordered region. The N-linked (GlcNAc...) asparagine glycan is linked to Asn7. The span at 44 to 53 (SSDDEDEGPQ) shows a compositional bias: acidic residues. N-linked (GlcNAc...) asparagine glycosylation is found at Asn70, Asn73, Asn118, Asn332, and Asn469. One can recognise an ABC transporter 1 domain in the interval 152-408 (LGLPDMVHQM…FINLGFECPD (257 aa)). 5 helical membrane-spanning segments follow: residues 513–533 (LLGS…VAFI), 552–572 (GATL…EILT), 599–619 (ILVD…TLYF), 628–648 (GAFF…SGVF), and 662–682 (MVPA…VVPV). The N-linked (GlcNAc...) asparagine glycan is linked to Asn714. A helical transmembrane segment spans residues 773 to 793 (GILIAMTIFNHVVYIVATEFI). The interval 811 to 834 (PSKAKSDPEASSSRPIPTTEKNNN) is disordered. Polar residues predominate over residues 819–834 (EASSSRPIPTTEKNNN). The ABC transporter 2 domain maps to 846 to 1088 (FHWNDVCYDI…TLTNYFVKHG (243 aa)). 882 to 889 (GVSGAGKT) contributes to the ATP binding site. The next 5 helical transmembrane spans lie at 1190-1210 (ALCI…PLSL), 1218-1238 (FAIF…MPHF), 1269-1289 (IPWN…PVGF), 1307-1327 (WLLI…AIAI), and 1333-1353 (AGGN…GVLA). Asn1402 carries an N-linked (GlcNAc...) asparagine glycan. The helical transmembrane segment at 1457 to 1477 (GIGMVYIVVNIVGALFLYWLI) threads the bilayer.

The protein belongs to the ABC transporter superfamily. ABCG family. PDR (TC 3.A.1.205) subfamily.

The protein localises to the cell membrane. It is found in the vacuole membrane. Functionally, ABC transporter involved in zearalenone production. The chain is ZEB2-regulated ABC transporter 1 from Gibberella zeae (strain ATCC MYA-4620 / CBS 123657 / FGSC 9075 / NRRL 31084 / PH-1) (Wheat head blight fungus).